The following is a 638-amino-acid chain: uncharacterized protein (638 aa).

In terms of domain architecture, CID spans 1–138 (MDLVELDYLS…KIENALLKYK (138 aa)). 2 disordered regions span residues 318–338 (QPPLTHSYVHPGPQSHKYSLS) and 615–638 (LGKRKERDDSMDSMSSKVIKQESK).

This is an uncharacterized protein from Schizosaccharomyces pombe (strain 972 / ATCC 24843) (Fission yeast).